Here is a 149-residue protein sequence, read N- to C-terminus: Large ribosomal subunit protein bL9 (149 aa).

Belongs to the bacterial ribosomal protein bL9 family.

Functionally, binds to the 23S rRNA. The sequence is that of Large ribosomal subunit protein bL9 from Helicobacter pylori (strain J99 / ATCC 700824) (Campylobacter pylori J99).